The chain runs to 264 residues: MTDTAQILPTTLEQNPQNTSKKPLLGVNVDHVATLRQARGVGYPSPLAAALLCEKAGADGITIHLREDRRHIQDADVYEMAGQLTTRMNLEMAATTEMLDIACQVKPYWVCLVPEKRAELTTEGGLDVAGQLASLTDYVSQLQAAGIKVSLFIDPEDKQIEAAVNCSADAIELHTGSYAEAGLAGKTDRVNVELERIKNAVITAKRLDSKLLVNAGHGLTRDNVHAIAQIDGIYELNIGHALIADALFVGIEQAVIMMKTAMHR.

Over residues 1-21 the composition is skewed to polar residues; sequence MTDTAQILPTTLEQNPQNTSK. The interval 1-22 is disordered; that stretch reads MTDTAQILPTTLEQNPQNTSKK. Position 28 (asparagine 28) interacts with 3-amino-2-oxopropyl phosphate. 30–31 is a binding site for 1-deoxy-D-xylulose 5-phosphate; sequence DH. Arginine 39 contacts 3-amino-2-oxopropyl phosphate. The active-site Proton acceptor is the histidine 64. Arginine 66 and histidine 71 together coordinate 1-deoxy-D-xylulose 5-phosphate. Residue glutamate 91 is the Proton acceptor of the active site. Residue threonine 121 coordinates 1-deoxy-D-xylulose 5-phosphate. The Proton donor role is filled by histidine 217. 3-amino-2-oxopropyl phosphate is bound by residues glycine 218 and 239 to 240; that span reads GH.

It belongs to the PNP synthase family. In terms of assembly, homooctamer; tetramer of dimers.

It localises to the cytoplasm. It carries out the reaction 3-amino-2-oxopropyl phosphate + 1-deoxy-D-xylulose 5-phosphate = pyridoxine 5'-phosphate + phosphate + 2 H2O + H(+). Its pathway is cofactor biosynthesis; pyridoxine 5'-phosphate biosynthesis; pyridoxine 5'-phosphate from D-erythrose 4-phosphate: step 5/5. Its function is as follows. Catalyzes the complicated ring closure reaction between the two acyclic compounds 1-deoxy-D-xylulose-5-phosphate (DXP) and 3-amino-2-oxopropyl phosphate (1-amino-acetone-3-phosphate or AAP) to form pyridoxine 5'-phosphate (PNP) and inorganic phosphate. The chain is Pyridoxine 5'-phosphate synthase from Psychrobacter cryohalolentis (strain ATCC BAA-1226 / DSM 17306 / VKM B-2378 / K5).